The following is a 430-amino-acid chain: Small ribosomal subunit protein uS3m (430 aa).

It belongs to the universal ribosomal protein uS3 family.

Its subcellular location is the mitochondrion. This chain is Small ribosomal subunit protein uS3m (RPS3), found in Marchantia polymorpha (Common liverwort).